Consider the following 4646-residue polypeptide: Cytoplasmic dynein 1 heavy chain 1 (4646 aa).

Serine 2 is subject to N-acetylserine. The segment at 53–1867 is stem; that stretch reads EAALEEKSAL…SIQMANAKFN (1815 aa). Serine 70 carries the post-translational modification Phosphoserine. Coiled-coil stretches lie at residues 181-202, 455-478, and 543-566; these read SVEK…NIEI, AHRK…QLRA, and TEAW…RITA. Positions 448-703 are interaction with DYNC1I2; it reads MVWRINPAHR…NTQEIFDDWA (256 aa). Residues 651–802 are interaction with DYNC1LI2; that stretch reads AKQIDRQLTA…EKVEERNTIS (152 aa). The residue at position 1125 (lysine 1125) is an N6-acetyllysine. Coiled-coil stretches lie at residues 1171–1252 and 1357–1373; these read TYVQ…AVES and RKLR…LKSF. Serine 1230 carries the post-translational modification Phosphoserine. 4 AAA regions span residues 1868-2099, 2180-2452, 2556-2805, and 2899-3168; these read YGFE…VLVS, EELK…LTRL, EVET…WVRG, and VFYE…GGRT. ATP is bound by residues 1906-1913 and 2224-2231; these read GPAGTGKT and GPSGSGKS. The disordered stretch occupies residues 2390 to 2411; that stretch reads GEDEAQRRRKGKEDEGEEAASP. Residues 2595–2602 and 2937–2944 each bind ATP; these read GPPGSGKT and GVSGAGKT. Coiled-coil stretches lie at residues 3189–3275, 3396–3500, and 3737–3800; these read EKRS…ADKQ, AIAQ…KNQM, and EFQL…VSQQ. Positions 3189–3500 are stalk; sequence EKRSELEEQQ…KTSETFKNQM (312 aa). At lysine 3480 the chain carries N6-acetyllysine. AAA regions lie at residues 3553-3782 and 4005-4221; these read LSNA…EVTR and AHMF…TVDT. Serine 4162 bears the Phosphoserine mark. Residue lysine 4283 is modified to N6-acetyllysine. At threonine 4366 the chain carries Phosphothreonine. A Phosphoserine modification is found at serine 4368.

The protein belongs to the dynein heavy chain family. As to quaternary structure, homodimer. The cytoplasmic dynein 1 complex consists of two catalytic heavy chains (HCs) and a number of non-catalytic subunits presented by intermediate chains (ICs), light intermediate chains (LICs) and light chains (LCs); the composition seems to vary in respect to the IC, LIC and LC composition. The heavy chain homodimer serves as a scaffold for the probable homodimeric assembly of the respective non-catalytic subunits. The ICs and LICs bind directly to the HC dimer and dynein LCs assemble on the IC dimer. Interacts with DYNC1LI1; DYNC1LI1 and DYNC1LI2 bind mutually exclusive to DYNC1H1. Interacts with DYNC1LI2; DYNC1LI1 and DYNC1LI2 bind mutually exclusive to DYNC1H1. Interacts with DYNC1I2. Interacts with BICD2. Interacts with isoform 2 of CRACR2A. Interacts with DNALI1.

The protein localises to the cytoplasm. Its subcellular location is the cytoskeleton. Cytoplasmic dynein 1 acts as a motor for the intracellular retrograde motility of vesicles and organelles along microtubules. Dynein has ATPase activity; the force-producing power stroke is thought to occur on release of ADP. Plays a role in mitotic spindle assembly and metaphase plate congression. The protein is Cytoplasmic dynein 1 heavy chain 1 of Homo sapiens (Human).